Here is a 477-residue protein sequence, read N- to C-terminus: MMSRESQPGLHRQLSRRNMLAAMGLAGAAAVSLPVLSACGVGGRTNAPNGASEVTGGFDWRKASGSTINILQTPHPYQQSYQPLLKEFTELTGINVNVDLVPEADYFTKLNTELAGGTGKHDAFMLGAYFIWQYGPPGWIEDLNPWLQNSSATNAEYDFEDIFEGLRTSTRWDFELGNPLGTGGQWAIPWGFENNVVAYNKAYFDQRGITKLPDNFDDFIQLAIDLTDRSENRYGIATRGSKSWATIHPGFMTQYVREGAVDYTFDGTDLVAEMDSDKAVEFTRKWIEMQHKAGPTSWTTYDYPNATGDLGDGTAMMVYDADSATYPKNKPGASAQAGNLGWYPGPAGPDGNYKTNLWTWTWAMNANSRNKLPAWLFIQWATGKESMNKAVEGGIYADPVRQSVFDTTFKRIAADQHGYLETFETVIGSSKIQFTPQKKFFDTTKDWAVALQDIYGGDDAASRLRSLAKTNTSKVNL.

Residues 1–38 (MMSRESQPGLHRQLSRRNMLAAMGLAGAAAVSLPVLSA) constitute a signal peptide (tat-type signal).

The protein belongs to the bacterial solute-binding protein 1 family. Predicted to be exported by the Tat system. The position of the signal peptide cleavage has not been experimentally proven.

Part of an ABC transporter complex involved in erythritol/L-threitol import. Binds erythritol and L-threitol. Functions in the transport for the degradation pathways of erythritol and L-threitol, that allow M.smegmatis to grow on these compounds as the sole carbon source. In Mycolicibacterium smegmatis (strain ATCC 700084 / mc(2)155) (Mycobacterium smegmatis), this protein is Erythritol/L-threitol-binding protein.